Consider the following 184-residue polypeptide: V-type proton ATPase subunit E (184 aa).

The protein belongs to the V-ATPase E subunit family.

Its function is as follows. Produces ATP from ADP in the presence of a proton gradient across the membrane. This chain is V-type proton ATPase subunit E, found in Finegoldia magna (strain ATCC 29328 / DSM 20472 / WAL 2508) (Peptostreptococcus magnus).